A 248-amino-acid polypeptide reads, in one-letter code: Probable transcriptional regulatory protein MYPE8020 (248 aa).

The protein belongs to the TACO1 family.

The protein resides in the cytoplasm. The protein is Probable transcriptional regulatory protein MYPE8020 of Malacoplasma penetrans (strain HF-2) (Mycoplasma penetrans).